A 183-amino-acid polypeptide reads, in one-letter code: uncharacterized protein (183 aa).

Residues 55–183 (PRAAVLLVDL…RSRRGSRPAR (129 aa)) form the GGDEF domain.

In terms of biological role, might be involved in pSAM2 replication control. This is an uncharacterized protein from Streptomyces ambofaciens.